Here is a 2641-residue protein sequence, read N- to C-terminus: Prosolanapyrone synthase (2641 aa).

The 427-residue stretch at 14–440 folds into the Ketosynthase family 3 (KS3) domain; the sequence is PEPIAIVGMG…GANGHCIIDD (427 aa). Residues C187, H323, and H363 each act as for beta-ketoacyl synthase activity in the active site. The interval 456-515 is disordered; sequence SIGHINGHTNGHTNGHTNGHTNGHTNGHTNGHTNGAHASDGHNGHHQNGMNGNSASHMSE. The span at 461–490 shows a compositional bias: low complexity; it reads NGHTNGHTNGHTNGHTNGHTNGHTNGHTNG. The interval 619-920 is malonyl-CoA:ACP transacylase (MAT); it reads FVFTGQGAQW…KGPVGQISRS (302 aa). The tract at residues 1011-1149 is N-terminal hotdog fold; that stretch reads HDLLGSKLPG…GRVRVIAGTS (139 aa). The segment at 1011 to 1309 is dehydratase (DH) domain; it reads HDLLGSKLPG…GNLRCVTYTE (299 aa). A PKS/mFAS DH domain is found at 1011-1313; it reads HDLLGSKLPG…CVTYTEVLPS (303 aa). H1043 acts as the Proton acceptor; for dehydratase activity in catalysis. Residues 1161–1313 are C-terminal hotdog fold; the sequence is ARTLDTKAWY…CVTYTEVLPS (153 aa). The active-site Proton donor; for dehydratase activity is the D1227. Residues 1477 to 1665 are methyltransferase (MT) domain; that stretch reads TGAYPQLVRF…GAELVLDDYP (189 aa). The tract at residues 1894-2206 is enoyl reductase (ER) domain; sequence GLLTSLYFKP…KGTHVGKLVV (313 aa). A ketoreductase (KR) domain region spans residues 2231–2408; it reads NYLITGGLGG…STVSFGLIRD (178 aa). The 79-residue stretch at 2561–2639 folds into the Carrier domain; it reads RTVALVTDAI…ILANKIVDGA (79 aa). The residue at position 2598 (S2598) is an O-(pantetheine 4'-phosphoryl)serine.

Its pathway is phytotoxin biosynthesis. In terms of biological role, prosolanapyrone synthase; part of the gene cluster that mediates the biosynthesis of the phytotoxin solanapyrone, a causal agent of early blight disease of potato and tomato. The prosolanapyrone synthase sol1 is a polyketide synthase that produces the octaketide desmethylprosolanapyrone I via sequential condensations of 7 malonyl-CoA units with one acetyl-CoA unit, and one methylation step. The octaketide backbone is further methylated by the sol2 O-methyltransferase to yield prosolanapyrone I. Prosolanapyrone I is hydroxylated to prosolanapyrone II by the cytochrome P450 monooxygenase sol6. The solanapyrone synthase sol5 then catalyzes the oxidation of prosolanapyrone II and the subsequent Diels Alder cycloisomerization of the product prosolanapyrone III to solanapyrones A and D. Solanapyrones A and D are then converted into solanapyrones B and E, respectively, by the sol3 dehydrogenase. The sequence is that of Prosolanapyrone synthase (sol1) from Alternaria solani.